The chain runs to 274 residues: MTQQLEQIIDQAWENRADFSPKNAPADLRNAVAQVIAQLNEGTLRVAQKDSGAWVVNQWVKKAVLLSFRLEDNIAMPSGEYMQFYDKVPTKFANYTAEDFAKGGFRVVPPAVARHGSFIGKNVVMMPSFVNIGAYVDEGSMVDAWATVGSCAQIGKNVHLSGGVGIGGVLEPMQANPTIIEDNCFIGARSEIVEGVIVEENSVISMGVYIGQSTKIYDRATGEVTYGRIPAGSVVVSGNLPSADGKYSLYCAVIVKRVDAKTRAKTGINELLRD.

Substrate is bound by residues arginine 106 and aspartate 143.

Belongs to the transferase hexapeptide repeat family. In terms of assembly, homotrimer.

It is found in the cytoplasm. It catalyses the reaction (S)-2,3,4,5-tetrahydrodipicolinate + succinyl-CoA + H2O = (S)-2-succinylamino-6-oxoheptanedioate + CoA. It functions in the pathway amino-acid biosynthesis; L-lysine biosynthesis via DAP pathway; LL-2,6-diaminopimelate from (S)-tetrahydrodipicolinate (succinylase route): step 1/3. This chain is 2,3,4,5-tetrahydropyridine-2,6-dicarboxylate N-succinyltransferase, found in Herminiimonas arsenicoxydans.